The primary structure comprises 342 residues: Prenyl transferase ptmC (342 aa).

A helical transmembrane segment spans residues 17 to 37 (LSFLTLTVGALALIVVLYISI). H110 provides a ligand contact to isopentenyl diphosphate. The Mg(2+) site is built by D117 and D121. Residue R126 participates in dimethylallyl diphosphate binding. N-linked (GlcNAc...) asparagine glycosylation occurs at N154. 5 residues coordinate dimethylallyl diphosphate: K210, T211, Q240, N247, and K257.

Belongs to the FPP/GGPP synthase family.

It localises to the membrane. It participates in secondary metabolite biosynthesis. In terms of biological role, prenyl transferase; part of the gene cluster that mediates the biosynthesis of the indole diterpenes penitrems. The geranylgeranyl diphosphate (GGPP) synthase ptmG catalyzes the first step in penitrem biosynthesis via conversion of farnesyl pyrophosphate and isopentyl pyrophosphate into geranylgeranyl pyrophosphate (GGPP). Condensation of indole-3-glycerol phosphate with GGPP by the prenyl transferase ptmC then forms 3-geranylgeranylindole (3-GGI). Epoxidation by the FAD-dependent monooxygenase ptmM leads to a epoxidized-GGI that is substrate of the terpene cyclase ptmB for cyclization to yield paspaline. Paspaline is subsequently converted to 13-desoxypaxilline by the cytochrome P450 monooxygenase ptmP, the latter being then converted to paxilline by the cytochrome P450 monooxygenase ptmQ. Paxilline is converted to beta-paxitriol via C-10 ketoreduction by the short-chain dehydrogenase ptmH which can be monoprenylated at the C-20 by the indole diterpene prenyltransferase ptmD. A two-step elimination (acetylation and elimination) process performed by the O-acetyltransferase ptmV and ptmI leads to the production of the prenylated form of penijanthine. The FAD-linked oxidoreductase ptmO then converts the prenylated form of penijanthine into PC-M5 which is in turn transformed into PC-M4 by the aromatic dimethylallyltransferase ptmE. Five sequential oxidative transformations performed by the cytochrome P450 monooxygenases ptmK, ptmU, ptmL, ptmN and ptmJ yield the various penitrem compounds. PtmK, ptmU and ptmM are involved in the formation of the key bicyclic ring of penitrem C via the formation of the intermediates secopenitrem D and penitrem D. PtmL catalyzes the epoxidation of penitrem D and C to yield penitrem B and F, respectively. PtmJ catalyzes the last benzylic hydroxylation to convert penitrem B to prenitrem E and penitrem F to penitrem A. This Penicillium ochrochloron protein is Prenyl transferase ptmC.